A 529-amino-acid chain; its full sequence is Bifunctional purine biosynthesis protein PurH (529 aa).

The MGS-like domain occupies 1-148 (MQQRRPIRRA…KNHKDVAIVV (148 aa)).

It belongs to the PurH family.

The enzyme catalyses (6R)-10-formyltetrahydrofolate + 5-amino-1-(5-phospho-beta-D-ribosyl)imidazole-4-carboxamide = 5-formamido-1-(5-phospho-D-ribosyl)imidazole-4-carboxamide + (6S)-5,6,7,8-tetrahydrofolate. It catalyses the reaction IMP + H2O = 5-formamido-1-(5-phospho-D-ribosyl)imidazole-4-carboxamide. The protein operates within purine metabolism; IMP biosynthesis via de novo pathway; 5-formamido-1-(5-phospho-D-ribosyl)imidazole-4-carboxamide from 5-amino-1-(5-phospho-D-ribosyl)imidazole-4-carboxamide (10-formyl THF route): step 1/1. Its pathway is purine metabolism; IMP biosynthesis via de novo pathway; IMP from 5-formamido-1-(5-phospho-D-ribosyl)imidazole-4-carboxamide: step 1/1. In Yersinia pseudotuberculosis serotype O:1b (strain IP 31758), this protein is Bifunctional purine biosynthesis protein PurH.